The following is a 464-amino-acid chain: L-cystine uptake protein TcyP (464 aa).

The next 10 membrane-spanning stretches (helical) occupy residues 3–23 (TLLV…LYYM), 34–54 (VFTA…IYEP), 73–93 (YVKL…ISAF), 107–127 (GLII…GIAA), 184–204 (PTST…FIGV), 225–245 (IVMR…LALM), 263–283 (FVLA…LLIA), 347–367 (AGIY…IDPL), 371–391 (FILT…GVGG), and 395–415 (FAAL…ALVI).

It belongs to the dicarboxylate/amino acid:cation symporter (DAACS) (TC 2.A.23) family.

The protein resides in the membrane. Its function is as follows. Mediates uptake of L-cystine, the oxidized form of L-cysteine. This Bacillus cereus (strain ATCC 14579 / DSM 31 / CCUG 7414 / JCM 2152 / NBRC 15305 / NCIMB 9373 / NCTC 2599 / NRRL B-3711) protein is L-cystine uptake protein TcyP.